The sequence spans 633 residues: MAAGDGGRVSSGRDVACVTEVADTLGAMANQGFDFLCMPIFHPRFKREFYKEPAKSRPGPQTRSDLLLSGRDWNTLIVGKLSDWIKTDSEVSRIRKTSEAAMQQELNFSAYLGLPAFLIPLKQEDNSNLSRLLINHIHVGHHSTMFWMRVPLMAPNDLRDDLIENEPISLSEEDNSGEERTWIWWHNFRSLCDYNKKIALAIEIGADLPSGHVIDRWLGEPIKAAFLPTSIFLTNKKGFPVLTKVHQRLIFKLFKLEVQFVISGSHHHSEKDLCSYLQYLEYLSQNSPPPNAYEMFAKGYEDYLQSPLQPLMDNLESQTYEVFEKDPVKYSQYQQAVYKCLLDRVPEEEKETNIQILMVLGAGRGPLVNASLRAAKQAERKIKVYAVEKNPNAVITLEGWRYEEWGSQVTVVSGDMREWKAPEKADIIVSELLGSFGDNELSPECLDGAQHFLKDDGVSIPGEYTSYLAPISSSKLYNEVRACREKDRDPEAQFEMPYVVRLHNFHQLSDPLPCFTFHHPNKDDVIDNNRYCCLQYRVDLNTVLHGFAGYFNTVLYKDVTLSICPESHSPGMFSWFPILFPIKQPIPMREGDTVCVRFWRCNNGKKVWYEWAVTSPVCSAIHNPTGRSYTIGL.

In terms of domain architecture, SAM-dependent MTase PRMT-type spans 304–611; sequence LQSPLQPLMD…NNGKKVWYEW (308 aa). Tyr-320 serves as a coordination point for S-adenosyl-L-methionine. Phe-323 lines the a protein pocket. S-adenosyl-L-methionine-binding positions include 329–330, Glu-388, and 414–416; these read KY and GDM. The a protein site is built by Glu-431 and Glu-440. Active-site proton donor/acceptor residues include Glu-431 and Glu-440. Glu-440 contacts S-adenosyl-L-methionine.

It belongs to the class I-like SAM-binding methyltransferase superfamily. Protein arginine N-methyltransferase family. As to quaternary structure, heterotetramer; dimer of heterodimer with wdr77. Interacts with wee2-a; this interaction is disrupted upon activation of the DNA replication checkpoint. As to expression, detected in egg (at protein level).

The protein localises to the cytoplasm. It localises to the nucleus. It is found in the cytosol. It carries out the reaction L-arginyl-[protein] + 2 S-adenosyl-L-methionine = N(omega),N(omega)'-dimethyl-L-arginyl-[protein] + 2 S-adenosyl-L-homocysteine + 2 H(+). In terms of biological role, arginine methyltransferase that can both catalyze the formation of omega-N monomethylarginine (MMA) and symmetrical dimethylarginine (sDMA), with a preference for the formation of MMA. Specifically mediates the symmetrical dimethylation of arginine residues in the small nuclear ribonucleoproteins; such methylation being required for the assembly and biogenesis of snRNP core particles. Methylates the arginine in the motif G-R-G-X-G in its substrates histone H2A, H2AX and H4, producing both monomethylated and symmetrically dimethylated 'Arg-3'. Methylates nucleoplasmin at 'Arg-192', producing both monomethylated and symmetrically dimethylated 'Arg-192'. Involved in the DNA replication checkpoint. Promotes entry into mitosis by promoting the proteasomal degradation of wee2-a. May act as a transcriptional corepressor in CRY1-mediated repression of the core circadian component PER1. Involved in spliceosome maturation and mRNA splicing. This Xenopus laevis (African clawed frog) protein is Protein arginine N-methyltransferase 5 (prmt5).